We begin with the raw amino-acid sequence, 157 residues long: Protein Smg homolog (157 aa).

It belongs to the Smg family.

The sequence is that of Protein Smg homolog from Aeromonas hydrophila subsp. hydrophila (strain ATCC 7966 / DSM 30187 / BCRC 13018 / CCUG 14551 / JCM 1027 / KCTC 2358 / NCIMB 9240 / NCTC 8049).